The primary structure comprises 208 residues: F-box/kelch-repeat protein At2g43270 (208 aa).

The region spanning 1–44 (MIYVVPDLLEEIFLGLPLKSILRFKTVSKQWRSILESKSFAERR) is the F-box domain. A Kelch repeat occupies 149–200 (RDKFNGSYKVVRMCFSPVEKCEVLDVETGEWSELNPPPNDIDVGRKSVCVNG).

The polypeptide is F-box/kelch-repeat protein At2g43270 (Arabidopsis thaliana (Mouse-ear cress)).